The primary structure comprises 712 residues: Eukaryotic translation initiation factor 3 subunit B (712 aa).

Met-1 carries the N-acetylmethionine modification. The 88-residue stretch at 56-143 folds into the RRM domain; sequence NIIVVDHLPV…HIFAVNMFDD (88 aa).

This sequence belongs to the eIF-3 subunit B family. Component of the eukaryotic translation initiation factor 3 (eIF-3) complex, which is composed of at least 13 different subunits. Binds to the translation initiation factor TIF3H1.

Its subcellular location is the cytoplasm. Functionally, RNA-binding component of the eukaryotic translation initiation factor 3 (eIF-3) complex, which is involved in protein synthesis of a specialized repertoire of mRNAs and, together with other initiation factors, stimulates binding of mRNA and methionyl-tRNAi to the 40S ribosome. The eIF-3 complex specifically targets and initiates translation of a subset of mRNAs involved in cell proliferation. The polypeptide is Eukaryotic translation initiation factor 3 subunit B (TIF3B1) (Arabidopsis thaliana (Mouse-ear cress)).